Reading from the N-terminus, the 147-residue chain is Large ribosomal subunit protein bL9 (147 aa).

This sequence belongs to the bacterial ribosomal protein bL9 family.

Functionally, binds to the 23S rRNA. The polypeptide is Large ribosomal subunit protein bL9 (Flavobacterium psychrophilum (strain ATCC 49511 / DSM 21280 / CIP 103535 / JIP02/86)).